A 267-amino-acid chain; its full sequence is 3-oxoadipate enol-lactonase 2 (267 aa).

The catalysed reaction is (4,5-dihydro-5-oxofuran-2-yl)-acetate + H2O = 3-oxoadipate + H(+). It functions in the pathway aromatic compound metabolism; beta-ketoadipate pathway; 3-oxoadipate from 5-oxo-4,5-dihydro-2-furylacetate: step 1/1. This Acinetobacter baylyi (strain ATCC 33305 / BD413 / ADP1) protein is 3-oxoadipate enol-lactonase 2 (catD).